Here is a 173-residue protein sequence, read N- to C-terminus: Transcription factor HES-2 (173 aa).

The region spanning 13–70 is the bHLH domain; sequence LRKSLKPLLEKRRRARINQSLSQLKGLILPLLGRENSNCSKLEKADVLEMTVRFLQEL. In terms of domain architecture, Orange spans 86–119; that stretch reads YREGYSACVARLARVLPACRVLEPAVSARLLEHL. The tract at residues 128-173 is disordered; it reads LDGGRAGDSSGPSAPAPAPASAPEPASAPVPSPPSPPCGPGLWRPW. The span at 141 to 166 shows a compositional bias: pro residues; that stretch reads APAPAPASAPEPASAPVPSPPSPPCG. Residues 170–173 carry the WRPW motif motif; sequence WRPW.

In terms of assembly, transcription repression requires formation of a complex with a corepressor protein of the Groucho/TLE family. Expressed in placenta, pancreatic cancer, colon cancer with RER, cervical cancer, and in head and neck tumors.

It localises to the nucleus. Its function is as follows. Transcriptional repressor of genes that require a bHLH protein for their transcription. The chain is Transcription factor HES-2 (HES2) from Homo sapiens (Human).